The sequence spans 523 residues: Metalloprotease TIKI2 (523 aa).

An N-terminal signal peptide occupies residues 1–26 (MGKTMWARAVFLCFSVGTLLWQEVLT). The Extracellular segment spans residues 27-499 (RRIPVDTGQC…HSQSNSSPKC (473 aa)). Asn225, Asn234, Asn283, and Asn341 each carry an N-linked (GlcNAc...) asparagine glycan. A helical transmembrane segment spans residues 500 to 516 (LSASPAFLYTLVTLCLI). Residues 517–523 (TTMRTRS) are Cytoplasmic-facing.

Belongs to the TIKI family. Mn(2+) serves as cofactor. The cofactor is Co(2+).

The protein resides in the cell membrane. Metalloprotease that acts as a negative regulator of the Wnt signaling pathway by mediating the cleavage of the N-terminal residues of a subset of Wnt proteins. Following cleavage, Wnt proteins become oxidized and form large disulfide-bond oligomers, leading to their inactivation. Able to cleave wnt8. Required for head formation. The polypeptide is Metalloprotease TIKI2 (trabd2b) (Xenopus tropicalis (Western clawed frog)).